The chain runs to 189 residues: Nucleoside triphosphate pyrophosphatase (189 aa).

Asp-70 (proton acceptor) is an active-site residue.

Belongs to the Maf family. A divalent metal cation serves as cofactor.

It localises to the cytoplasm. The enzyme catalyses a ribonucleoside 5'-triphosphate + H2O = a ribonucleoside 5'-phosphate + diphosphate + H(+). It catalyses the reaction a 2'-deoxyribonucleoside 5'-triphosphate + H2O = a 2'-deoxyribonucleoside 5'-phosphate + diphosphate + H(+). In terms of biological role, nucleoside triphosphate pyrophosphatase. May have a dual role in cell division arrest and in preventing the incorporation of modified nucleotides into cellular nucleic acids. The polypeptide is Nucleoside triphosphate pyrophosphatase (Xylella fastidiosa (strain M23)).